Reading from the N-terminus, the 287-residue chain is Bifunctional protein FolD (287 aa).

NADP(+)-binding positions include 160-162 (GRS), Ser-189, and Ile-230.

The protein belongs to the tetrahydrofolate dehydrogenase/cyclohydrolase family. In terms of assembly, homodimer.

The enzyme catalyses (6R)-5,10-methylene-5,6,7,8-tetrahydrofolate + NADP(+) = (6R)-5,10-methenyltetrahydrofolate + NADPH. It catalyses the reaction (6R)-5,10-methenyltetrahydrofolate + H2O = (6R)-10-formyltetrahydrofolate + H(+). Its pathway is one-carbon metabolism; tetrahydrofolate interconversion. Functionally, catalyzes the oxidation of 5,10-methylenetetrahydrofolate to 5,10-methenyltetrahydrofolate and then the hydrolysis of 5,10-methenyltetrahydrofolate to 10-formyltetrahydrofolate. The polypeptide is Bifunctional protein FolD (Chlamydia felis (strain Fe/C-56) (Chlamydophila felis)).